We begin with the raw amino-acid sequence, 402 residues long: Propionate kinase (402 aa).

ATP-binding residues include N11 and K18. N11 serves as a coordination point for Mg(2+). R86 is a binding site for substrate. D143 acts as the Proton donor/acceptor in catalysis. Residues H175, 203-207, 278-280, and 326-330 each bind ATP; these read HLGNG, DLR, and GIGEN.

It belongs to the acetokinase family. TdcD subfamily. Homodimer. It depends on Mg(2+) as a cofactor.

It catalyses the reaction propanoate + ATP = propanoyl phosphate + ADP. The protein operates within amino-acid degradation; L-threonine degradation via propanoate pathway; propanoate from L-threonine: step 4/4. Functionally, catalyzes the conversion of propionyl phosphate and ADP to propionate and ATP. The polypeptide is Propionate kinase (Citrobacter koseri (strain ATCC BAA-895 / CDC 4225-83 / SGSC4696)).